Reading from the N-terminus, the 641-residue chain is Tetracycline resistance protein TetQ (641 aa).

The tr-type G domain maps to 1–244 (MNIINLGILA…AITSFILPPA (244 aa)). GTP is bound by residues 10–17 (AHIDAGKT), 74–78 (DTPGH), and 128–131 (NKID).

Belongs to the TRAFAC class translation factor GTPase superfamily. Classic translation factor GTPase family. TetM/TetO subfamily.

Its function is as follows. Abolishes the inhibitory effect of tetracyclin on protein synthesis by a non-covalent modification of the ribosomes. This chain is Tetracycline resistance protein TetQ (tetQ), found in Xylanibacter ruminicola (Prevotella ruminicola).